A 71-amino-acid polypeptide reads, in one-letter code: Small ribosomal subunit protein bS21 (71 aa).

The disordered stretch occupies residues 40 to 71 (KPTQERKRKAAAAVKRNIRRTSRDVTKRKRLY). Residues 45–71 (RKRKAAAAVKRNIRRTSRDVTKRKRLY) are compositionally biased toward basic residues.

It belongs to the bacterial ribosomal protein bS21 family.

The sequence is that of Small ribosomal subunit protein bS21 from Xylella fastidiosa (strain M23).